The following is a 499-amino-acid chain: Lysine--tRNA ligase (499 aa).

2 residues coordinate Mg(2+): Glu-408 and Glu-415.

The protein belongs to the class-II aminoacyl-tRNA synthetase family. As to quaternary structure, homodimer. Mg(2+) serves as cofactor.

The protein resides in the cytoplasm. The enzyme catalyses tRNA(Lys) + L-lysine + ATP = L-lysyl-tRNA(Lys) + AMP + diphosphate. This Bacillus thuringiensis (strain Al Hakam) protein is Lysine--tRNA ligase.